A 241-amino-acid chain; its full sequence is Tetraspanin-1 (241 aa).

Over 1 to 11 (MQCFSFIKTMM) the chain is Cytoplasmic. Residues 12–34 (ILFNLLIFLCGAALLAVGIWVSI) traverse the membrane as a helical segment. Residues 35–53 (DGASFLKIFGPLSSSAMQF) are Extracellular-facing. The helical transmembrane segment at 54–76 (VNVGYFLIAAGVVVFALGFLGCY) threads the bilayer. Topologically, residues 77 to 88 (GAKTESKCALMT) are cytoplasmic. A helical membrane pass occupies residues 89 to 111 (FFFILLLIFIAEVAAAVVALVYT). Residues 112–214 (TMAEHFLTLL…LYDIRTNAVT (103 aa)) lie on the Extracellular side of the membrane. 4 N-linked (GlcNAc...) asparagine glycosylation sites follow: Asn141, Asn154, Asn178, and Asn184. The helical transmembrane segment at 215–237 (VGGVAAGIGGLELAAMIVSMYLY) threads the bilayer. The Cytoplasmic segment spans residues 238–241 (CNLQ).

The protein belongs to the tetraspanin (TM4SF) family. As to quaternary structure, interacts with SLC19A2. Interacts with NTRK1/TRKA.

The protein localises to the lysosome membrane. In terms of biological role, structural component of specialized membrane microdomains known as tetraspanin-enriched microdomains (TERMs), which act as platforms for receptor clustering and signaling. Participates thereby in diverse biological functions such as cell signal transduction, adhesion, migration and protein trafficking. Regulates neuronal differentiation in response to NGF by facilitating NGF-mediated activation of NTRK1/TRKA receptor tyrosine kinase and subsequent downstream signaling pathways. Plays a role in the inhibition of TNFalpha-induced apoptosis. Mechanistically, inhibits the NF-kappa-B signaling pathway by blocking phosphorylation of CHUK. Also promotes the stability of the thiamine transporter 1/SLC19A2 in intestinal epithelial cells leading to an increase of thiamine uptake process. This chain is Tetraspanin-1 (TSPAN1), found in Pongo abelii (Sumatran orangutan).